The following is a 439-amino-acid chain: ATP-dependent RNA helicase RhlB (439 aa).

Residues 9–37 (QKFADLPLCDEVKQALNENGFEHCTPIQA) carry the Q motif motif. The region spanning 40–219 (LPVLLEKKDI…YDHMNDPVKV (180 aa)) is the Helicase ATP-binding domain. 53 to 60 (AQTGTGKT) contributes to the ATP binding site. A DEAD box motif is present at residues 165-168 (DEAD). The region spanning 243–390 (KLKLLHSLIE…VTSYDRDALI (148 aa)) is the Helicase C-terminal domain. Residues 394 to 439 (PPVKIHRKPHAGGRNLRDRNGSPRPSGSHRSGSGRPPRHDRTRRHS) are disordered. The segment covering 415–428 (SPRPSGSHRSGSGR) has biased composition (low complexity). Residues 429–439 (PPRHDRTRRHS) are compositionally biased toward basic residues.

The protein belongs to the DEAD box helicase family. RhlB subfamily. In terms of assembly, component of the RNA degradosome, which is a multiprotein complex involved in RNA processing and mRNA degradation.

The protein resides in the cytoplasm. The enzyme catalyses ATP + H2O = ADP + phosphate + H(+). In terms of biological role, DEAD-box RNA helicase involved in RNA degradation. Has RNA-dependent ATPase activity and unwinds double-stranded RNA. This chain is ATP-dependent RNA helicase RhlB, found in Shewanella amazonensis (strain ATCC BAA-1098 / SB2B).